The sequence spans 204 residues: Large ribosomal subunit protein eL15 (204 aa).

The protein belongs to the eukaryotic ribosomal protein eL15 family. As to quaternary structure, component of the large ribosomal subunit.

It is found in the cytoplasm. Component of the large ribosomal subunit. The ribosome is a large ribonucleoprotein complex responsible for the synthesis of proteins in the cell. In Cyprinus carpio (Common carp), this protein is Large ribosomal subunit protein eL15 (rpl15).